The chain runs to 467 residues: Protein indeterminate-domain 6, chloroplastic (467 aa).

Residues 1 to 20 (MSSSYNTIALSSTPTFLLSS) constitute a chloroplast transit peptide. The segment at 38 to 65 (TMVQQQPTSSVAPPPKKRRNQPGNPNPD) is disordered. Over residues 39–48 (MVQQQPTSSV) the composition is skewed to polar residues. Serine 72 is modified (phosphoserine). 2 C2H2-type zinc fingers span residues 82-104 (FLCE…RRGH) and 123-153 (YLCP…YRKH). The segment at 158–181 (WKCDKCSKRYAVQSDWKAHSKTCG) adopts a C2H2-type 2; degenerate zinc-finger fold. 8 residues coordinate Zn(2+): cysteine 160, cysteine 163, histidine 176, cysteine 180, cysteine 187, cysteine 189, histidine 202, and cysteine 206. The CCHC-type 2; atypical zinc-finger motif lies at 185–208 (YRCDCGTIFSRRDSYITHRAFCDA). Residues 195–207 (RRDSYITHRAFCD) form an SHR-binding region. A disordered region spans residues 440–467 (NGRGGRSGGPPLDAEMKFSHPNHPYGKA).

It localises to the plastid. The protein resides in the chloroplast. Probable transcription factor. The sequence is that of Protein indeterminate-domain 6, chloroplastic from Arabidopsis thaliana (Mouse-ear cress).